Consider the following 227-residue polypeptide: Germin-like protein subfamily 1 member 3 (227 aa).

A signal peptide spans methionine 1–cysteine 24. A disulfide bridge connects residues cysteine 34 and cysteine 50. Residues serine 64–arginine 212 form the Cupin type-1 domain. Histidine 109, histidine 111, and glutamate 116 together coordinate Mn(2+). Asparagine 136 is a glycosylation site (N-linked (GlcNAc...) asparagine). Mn(2+) is bound at residue histidine 160.

Belongs to the germin family. Oligomer (believed to be a pentamer but probably hexamer).

The protein localises to the secreted. Its subcellular location is the extracellular space. The protein resides in the apoplast. Its function is as follows. May play a role in plant defense. Probably has no oxalate oxidase activity even if the active site is conserved. The polypeptide is Germin-like protein subfamily 1 member 3 (Arabidopsis thaliana (Mouse-ear cress)).